We begin with the raw amino-acid sequence, 64 residues long: Lectin-A (64 aa).

Chitin-binding type-1 domains follow at residues 1–20 (APECGREAHCGDDCQSQVVT) and 22–45 (DFDDRTCPKLLCCSKDGWCGNTDA).

Glycosylated.

Functionally, N-acetyl-D-glucosamine binding lectin. Shows low hemagglutinating activity towards human erythrocytes. Has low mitogenic activity towards human peripheral blood lymphocytes. The polypeptide is Lectin-A (Phytolacca americana (American pokeweed)).